We begin with the raw amino-acid sequence, 205 residues long: Phosphoheptose isomerase (205 aa).

Residues 38–200 form the SIS domain; that stretch reads LAVRLALGSK…LFEAVGELEP (163 aa). A substrate-binding site is contributed by 53 to 55; it reads NGG. Zn(2+) contacts are provided by H62 and E66. Substrate contacts are provided by residues E66, 95–96, 121–123, S126, and Q173; these read ND and STS. Zn(2+) is bound by residues Q173 and H181.

The protein belongs to the SIS family. GmhA subfamily. In terms of assembly, homotetramer. Zn(2+) serves as cofactor.

The protein localises to the cytoplasm. The catalysed reaction is 2 D-sedoheptulose 7-phosphate = D-glycero-alpha-D-manno-heptose 7-phosphate + D-glycero-beta-D-manno-heptose 7-phosphate. It participates in carbohydrate biosynthesis; D-glycero-D-manno-heptose 7-phosphate biosynthesis; D-glycero-alpha-D-manno-heptose 7-phosphate and D-glycero-beta-D-manno-heptose 7-phosphate from sedoheptulose 7-phosphate: step 1/1. Catalyzes the isomerization of sedoheptulose 7-phosphate in D-glycero-D-manno-heptose 7-phosphate. In Maridesulfovibrio salexigens (strain ATCC 14822 / DSM 2638 / NCIMB 8403 / VKM B-1763) (Desulfovibrio salexigens), this protein is Phosphoheptose isomerase.